The following is a 339-amino-acid chain: Biotin synthase (339 aa).

One can recognise a Radical SAM core domain in the interval 55–288 (LSEGALHSCS…GKIIKFAAGR (234 aa)). Residues C73, C77, and C80 each contribute to the [4Fe-4S] cluster site. C152, C213, and K283 together coordinate [2Fe-2S] cluster.

The protein belongs to the radical SAM superfamily. Biotin synthase family. In terms of assembly, homodimer. [4Fe-4S] cluster is required as a cofactor. [2Fe-2S] cluster serves as cofactor.

The catalysed reaction is (4R,5S)-dethiobiotin + (sulfur carrier)-SH + 2 reduced [2Fe-2S]-[ferredoxin] + 2 S-adenosyl-L-methionine = (sulfur carrier)-H + biotin + 2 5'-deoxyadenosine + 2 L-methionine + 2 oxidized [2Fe-2S]-[ferredoxin]. The protein operates within cofactor biosynthesis; biotin biosynthesis; biotin from 7,8-diaminononanoate: step 2/2. In terms of biological role, catalyzes the conversion of dethiobiotin (DTB) to biotin by the insertion of a sulfur atom into dethiobiotin via a radical-based mechanism. The protein is Biotin synthase of Chlorobium phaeobacteroides (strain BS1).